A 271-amino-acid polypeptide reads, in one-letter code: Glutamate racemase (271 aa).

Residues Asp12–Ser13 and Tyr44–Gly45 each bind substrate. Cys75 serves as the catalytic Proton donor/acceptor. Substrate is bound at residue Asn76 to Ser77. Cys185 (proton donor/acceptor) is an active-site residue. Thr186–His187 is a binding site for substrate.

This sequence belongs to the aspartate/glutamate racemases family.

The catalysed reaction is L-glutamate = D-glutamate. Its pathway is cell wall biogenesis; peptidoglycan biosynthesis. Provides the (R)-glutamate required for cell wall biosynthesis. The chain is Glutamate racemase from Mycobacterium bovis (strain ATCC BAA-935 / AF2122/97).